We begin with the raw amino-acid sequence, 81 residues long: uncharacterized protein (81 aa).

To M.thermoautotrophicum MTH886.

This is an uncharacterized protein from Methanocaldococcus jannaschii (strain ATCC 43067 / DSM 2661 / JAL-1 / JCM 10045 / NBRC 100440) (Methanococcus jannaschii).